Here is a 479-residue protein sequence, read N- to C-terminus: Ribosomal RNA small subunit methyltransferase F (479 aa).

S-adenosyl-L-methionine-binding positions include 125 to 131 (AAAPGSK), E149, D176, and D194. The active-site Nucleophile is the C247.

The protein belongs to the class I-like SAM-binding methyltransferase superfamily. RsmB/NOP family.

The protein localises to the cytoplasm. The enzyme catalyses cytidine(1407) in 16S rRNA + S-adenosyl-L-methionine = 5-methylcytidine(1407) in 16S rRNA + S-adenosyl-L-homocysteine + H(+). Its function is as follows. Specifically methylates the cytosine at position 1407 (m5C1407) of 16S rRNA. This chain is Ribosomal RNA small subunit methyltransferase F (rsmF), found in Escherichia coli (strain K12).